The primary structure comprises 262 residues: Capsid protein (262 aa).

The disordered stretch occupies residues 183–262; the sequence is APTIEAITRP…SHHRSPSPRK (80 aa). The Bipartite nuclear localization signal motif lies at 215–233; the sequence is RRRKVKTTVVYGRRRSKSR. 2 stretches are compositionally biased toward basic residues: residues 215-234 and 252-262; these read RRRKVKTTVVYGRRRSKSRE and SSHHRSPSPRK.

Belongs to the avihepadnavirus core antigen family. As to quaternary structure, homodimerizes, then multimerizes.

The protein localises to the virion. It is found in the host cytoplasm. Its function is as follows. Self assembles to form an icosahedral capsid. Most capsid appear to be large particles with an icosahedral symmetry of T=4 and consist of 240 copies of capsid protein, though a fraction forms smaller T=3 particles consisting of 180 capsid proteins. Entering capsid are transported along microtubules to the nucleus. Phosphorylation of the capsid is thought to induce exposure of nuclear localization signal in the C-terminal portion of the capsid protein that allows binding to the nuclear pore complex via the importin (karyopherin-) alpha and beta. Capsids are imported in intact form through the nuclear pore into the nuclear basket, where it probably binds NUP153. Only capsids that contain the mature viral genome can release the viral DNA and capsid protein into the nucleoplasm. Immature capsids get stucked in the basket. Capsids encapsulate the pre-genomic RNA and the P protein. Pre-genomic RNA is reverse transcribed into DNA while the capsid is still in the cytoplasm. The capsid can then either be directed to the nucleus, providing more genome for transcription, or bud through the endoplasmic reticulum to provide new virions. This Duck hepatitis B virus (isolate Shanghai/DHBVQCA34) (DHBV) protein is Capsid protein (C).